The sequence spans 148 residues: Deoxyuridine 5'-triphosphate nucleotidohydrolase (148 aa).

Residues 67 to 69, Asn80, 84 to 86, and Met94 each bind substrate; these read RSG and LID.

This sequence belongs to the dUTPase family. The cofactor is Mg(2+).

The catalysed reaction is dUTP + H2O = dUMP + diphosphate + H(+). Its pathway is pyrimidine metabolism; dUMP biosynthesis; dUMP from dCTP (dUTP route): step 2/2. In terms of biological role, this enzyme is involved in nucleotide metabolism: it produces dUMP, the immediate precursor of thymidine nucleotides and it decreases the intracellular concentration of dUTP so that uracil cannot be incorporated into DNA. The sequence is that of Deoxyuridine 5'-triphosphate nucleotidohydrolase from Burkholderia multivorans (strain ATCC 17616 / 249).